Consider the following 28-residue polypeptide: 50 kDa venom protease (28 aa).

It belongs to the venom metalloproteinase (M12B) family. The cofactor is Zn(2+). In terms of tissue distribution, expressed by the venom gland.

The protein resides in the secreted. This chain is 50 kDa venom protease, found in Proatheris superciliaris (Lowland swamp viper).